The sequence spans 145 residues: D-aminoacyl-tRNA deacylase (145 aa).

Positions 137 to 138 match the Gly-cisPro motif, important for rejection of L-amino acids motif; it reads GP.

The protein belongs to the DTD family. In terms of assembly, homodimer.

Its subcellular location is the cytoplasm. The catalysed reaction is glycyl-tRNA(Ala) + H2O = tRNA(Ala) + glycine + H(+). It catalyses the reaction a D-aminoacyl-tRNA + H2O = a tRNA + a D-alpha-amino acid + H(+). In terms of biological role, an aminoacyl-tRNA editing enzyme that deacylates mischarged D-aminoacyl-tRNAs. Also deacylates mischarged glycyl-tRNA(Ala), protecting cells against glycine mischarging by AlaRS. Acts via tRNA-based rather than protein-based catalysis; rejects L-amino acids rather than detecting D-amino acids in the active site. By recycling D-aminoacyl-tRNA to D-amino acids and free tRNA molecules, this enzyme counteracts the toxicity associated with the formation of D-aminoacyl-tRNA entities in vivo and helps enforce protein L-homochirality. The polypeptide is D-aminoacyl-tRNA deacylase (Pseudoalteromonas translucida (strain TAC 125)).